Reading from the N-terminus, the 227-residue chain is Ribosomal RNA large subunit methyltransferase E (227 aa).

Positions 78, 80, 103, 119, and 143 each coordinate S-adenosyl-L-methionine. K183 (proton acceptor) is an active-site residue.

The protein belongs to the class I-like SAM-binding methyltransferase superfamily. RNA methyltransferase RlmE family.

The protein resides in the cytoplasm. The enzyme catalyses uridine(2552) in 23S rRNA + S-adenosyl-L-methionine = 2'-O-methyluridine(2552) in 23S rRNA + S-adenosyl-L-homocysteine + H(+). Its function is as follows. Specifically methylates the uridine in position 2552 of 23S rRNA at the 2'-O position of the ribose in the fully assembled 50S ribosomal subunit. This Rickettsia conorii (strain ATCC VR-613 / Malish 7) protein is Ribosomal RNA large subunit methyltransferase E.